Reading from the N-terminus, the 465-residue chain is GTPase Der (465 aa).

EngA-type G domains follow at residues 3–167 and 179–352; these read PLVA…PERS and IHIA…VSAL. GTP contacts are provided by residues 9–16, 57–61, 119–122, 185–192, 232–236, and 297–300; these read GRPNVGKS, DTGGM, NKID, DTAGL, and NKWD. Residues 353-437 enclose the KH-like domain; it reads RQFSTSEVNK…PVRFLFREGD (85 aa).

It belongs to the TRAFAC class TrmE-Era-EngA-EngB-Septin-like GTPase superfamily. EngA (Der) GTPase family. In terms of assembly, associates with the 50S ribosomal subunit.

Functionally, GTPase that plays an essential role in the late steps of ribosome biogenesis. The protein is GTPase Der of Xylella fastidiosa (strain M12).